The sequence spans 539 residues: MGFNVVVFLSCLLLLPPVTFGSNMERTTLVIDGSRRIAETDENFICATLDWWPPEKCNYDQCPWGYASLINLNLASPLLAKAIQAFRTLRIRIGGSLQDQVIYDVGDLKTPCTQFKKTDDGLFGFSEGCLYMKRWDEVNHFFNATGAIVTFGLNALHGRNKLNGTAWGGDWDHTNTQDFMNYTVSKGYAIDSWEFGNELSGSGIWASVSVELYGKDLIVLKNVIKNVYKNSRTKPLVVAPGGFFEEQWYSELLRLSGPGVLDVLTHHIYNLGPGNDPKLVNKILDPNYLSGISELFANVNQTIQEHGPWAAAWVGEAGGAFNSGGRQVSETFINSFWYLDQLGISSKHNTKVYCRQALVGGFYGLLEKETFVPNPDYYSALLWHRLMGKGILGVQTTASEYLRAYVHCSKRRAGITILLINLSKHTTFTVAVSNGVKVVLQAESMKRKSFLETIKSKVSWVGNKASDGYLNREEYHLSPKDGDLRSKIMLLNGKPLVPTATGDIPKLEPVRHGVKSPVYINPLSISFIVLPTFDAPACS.

Residues 1–21 (MGFNVVVFLSCLLLLPPVTFG) form the signal peptide. Residues asparagine 143, asparagine 163, and asparagine 181 are each glycosylated (N-linked (GlcNAc...) asparagine). Residue glutamate 198 is the Proton donor of the active site. A glycan (N-linked (GlcNAc...) asparagine) is linked at asparagine 300. The active-site Nucleophile is the glutamate 316. N-linked (GlcNAc...) asparagine glycosylation occurs at asparagine 421.

The protein belongs to the glycosyl hydrolase 79 family.

The protein resides in the lysosome membrane. Its subcellular location is the secreted. Endoglycosidase which is a cell surface and extracellular matrix-degrading enzyme. Cleaves heparan sulfate proteoglycans (HSPGs) into heparan sulfate side chains and core proteoglycans. The polypeptide is Heparanase-like protein 2 (Arabidopsis thaliana (Mouse-ear cress)).